We begin with the raw amino-acid sequence, 108 residues long: TYRO protein tyrosine kinase-binding protein (108 aa).

An N-terminal signal peptide occupies residues 1–25 (MGRLGPSNGLLPLLLAVGGFSLVQA). At 26 to 36 (QRECSCSAVSP) the chain is on the extracellular side. Residues 37–57 (GILAGIVLGDLVLTLLIALAV) traverse the membrane as a helical segment. Aspartate 46 contacts Ca(2+). At 58-108 (YSLGRLVPRTRGAVDVTRKQHIAETESAYQELQGQRSDVYSDLNTQRQYYK) the chain is on the cytoplasmic side. Positions 75 to 103 (RKQHIAETESAYQELQGQRSDVYSDLNTQ) constitute an ITAM domain. Phosphotyrosine is present on residues tyrosine 86 and tyrosine 97.

The protein belongs to the TYROBP family. In terms of assembly, homodimer; disulfide-linked. Homotrimer; disulfide-linked. Homotetramer; disulfide-linked. Homotrimers and homotetramers form when low levels of partner receptors are available and is competitive with assembly with interacting receptors. They may represent alternative oligomerization states or may be intermediates in the receptor assembly process. Binding of a metal cation aids in homooligomerization through coordination of the metal ion by the subunits of the oligomer. Interacts with TREM1. Interacts with TREM2. Interacts with CLECSF5. Interacts with CD300LB and CD300C2. Interacts with CD300E. Interacts (via ITAM domain) with SYK (via SH2 domains); activates SYK mediating neutrophils and macrophages integrin-mediated activation. Interacts with KLRC2. Interacts with CD300H. Interacts with KLRD1. Interacts with SIGLEC1. In terms of processing, following ligand binding by associated receptors, tyrosine phosphorylated in the ITAM domain which leads to activation of additional tyrosine kinases and subsequent cell activation. Highly expressed in spleen, liver and thymus. Weakly expressed in lymph nodes. Expressed in peripheral blood leukocytes, granulocytes, macrophages, and monocytes. LPS does not increase expression in granulocytes.

The protein resides in the cell membrane. In terms of biological role, adapter protein which non-covalently associates with activating receptors found on the surface of a variety of immune cells to mediate signaling and cell activation following ligand binding by the receptors. TYROBP is tyrosine-phosphorylated in the ITAM domain following ligand binding by the associated receptors which leads to activation of additional tyrosine kinases and subsequent cell activation. Also has an inhibitory role in some cells. Non-covalently associates with activating receptors of the CD300 family to mediate cell activation. Also mediates cell activation through association with activating receptors of the CD200R family. Required for neutrophil activation mediated by integrin. Required for the activation of myeloid cells mediated by the CLEC5A/MDL1 receptor. Associates with natural killer (NK) cell receptors such as the KLRD1/KLRC2 heterodimer to mediate NK cell activation. Associates with TREM1 to mediate activation of neutrophils and monocytes. Associates with TREM2 on monocyte-derived dendritic cells to mediate up-regulation of chemokine receptor CCR7 and dendritic cell maturation and survival. Association with TREM2 mediates cytokine-induced formation of multinucleated giant cells which are formed by the fusion of macrophages. Stabilizes the TREM2 C-terminal fragment (TREM2-CTF) produced by TREM2 ectodomain shedding which suppresses the release of pro-inflammatory cytokines. In microglia, required with TREM2 for phagocytosis of apoptotic neurons. Required with ITGAM/CD11B in microglia to control production of microglial superoxide ions which promote the neuronal apoptosis that occurs during brain development. Promotes pro-inflammatory responses in microglia following nerve injury which accelerates degeneration of injured neurons. Positively regulates the expression of the IRAK3/IRAK-M kinase and IL10 production by liver dendritic cells and inhibits their T cell allosimulatory ability. Negatively regulates B cell proliferation. Required for CSF1-mediated osteoclast cytoskeletal organization. Positively regulates multinucleation during osteoclast development. The sequence is that of TYRO protein tyrosine kinase-binding protein from Sus scrofa (Pig).